We begin with the raw amino-acid sequence, 517 residues long: Aspartyl/glutamyl-tRNA(Asn/Gln) amidotransferase subunit B (517 aa).

The protein belongs to the GatB/GatE family. GatB subfamily. In terms of assembly, heterotrimer of A, B and C subunits.

The enzyme catalyses L-glutamyl-tRNA(Gln) + L-glutamine + ATP + H2O = L-glutaminyl-tRNA(Gln) + L-glutamate + ADP + phosphate + H(+). It catalyses the reaction L-aspartyl-tRNA(Asn) + L-glutamine + ATP + H2O = L-asparaginyl-tRNA(Asn) + L-glutamate + ADP + phosphate + 2 H(+). Functionally, allows the formation of correctly charged Asn-tRNA(Asn) or Gln-tRNA(Gln) through the transamidation of misacylated Asp-tRNA(Asn) or Glu-tRNA(Gln) in organisms which lack either or both of asparaginyl-tRNA or glutaminyl-tRNA synthetases. The reaction takes place in the presence of glutamine and ATP through an activated phospho-Asp-tRNA(Asn) or phospho-Glu-tRNA(Gln). In Thermobifida fusca (strain YX), this protein is Aspartyl/glutamyl-tRNA(Asn/Gln) amidotransferase subunit B.